The primary structure comprises 327 residues: Zinc transport protein ZntB (327 aa).

The Cytoplasmic portion of the chain corresponds to 1–273 (MEAIKGSDVN…ARRTYTMSLM (273 aa)). A helical membrane pass occupies residues 274–294 (AMVFLPSTFLTGLFGVNLGGI). At 295–300 (PGGGWQ) the chain is on the periplasmic side. Residues 301 to 321 (FGFSIFCILLVVLIGGVALWL) form a helical membrane-spanning segment. At 322 to 327 (YRSKWL) the chain is on the cytoplasmic side.

Belongs to the CorA metal ion transporter (MIT) (TC 1.A.35) family.

It is found in the cell inner membrane. The enzyme catalyses Zn(2+)(out) + H(+)(out) = Zn(2+)(in) + H(+)(in). Its function is as follows. Zinc transporter. Acts as a Zn(2+):proton symporter, which likely mediates zinc ion uptake. The protein is Zinc transport protein ZntB of Shigella flexneri serotype 5b (strain 8401).